The chain runs to 113 residues: U11-theraphotoxin-Hhn1a (113 aa).

Residues Met-1–Ala-21 form the signal peptide. Positions Asp-22–Arg-74 are excised as a propeptide. Disulfide bonds link Cys-75–Cys-90, Cys-82–Cys-95, and Cys-89–Cys-110.

This sequence belongs to the neurotoxin 14 (magi-1) family. 01 (HNTX-16) subfamily. As to expression, expressed by the venom gland.

It is found in the secreted. In terms of biological role, probable ion channel inhibitor. The protein is U11-theraphotoxin-Hhn1a of Cyriopagopus hainanus (Chinese bird spider).